Here is a 236-residue protein sequence, read N- to C-terminus: 2,3,4,5-tetrahydropyridine-2,6-dicarboxylate N-acetyltransferase (236 aa).

This sequence belongs to the transferase hexapeptide repeat family. DapH subfamily.

It carries out the reaction (S)-2,3,4,5-tetrahydrodipicolinate + acetyl-CoA + H2O = L-2-acetamido-6-oxoheptanedioate + CoA. Its pathway is amino-acid biosynthesis; L-lysine biosynthesis via DAP pathway; LL-2,6-diaminopimelate from (S)-tetrahydrodipicolinate (acetylase route): step 1/3. Its function is as follows. Catalyzes the transfer of an acetyl group from acetyl-CoA to tetrahydrodipicolinate. The sequence is that of 2,3,4,5-tetrahydropyridine-2,6-dicarboxylate N-acetyltransferase from Lactobacillus acidophilus (strain ATCC 700396 / NCK56 / N2 / NCFM).